We begin with the raw amino-acid sequence, 239 residues long: Ribonuclease PH (239 aa).

Residues Arg87 and 125–127 (GTR) contribute to the phosphate site.

The protein belongs to the RNase PH family. In terms of assembly, homohexameric ring arranged as a trimer of dimers.

The enzyme catalyses tRNA(n+1) + phosphate = tRNA(n) + a ribonucleoside 5'-diphosphate. Phosphorolytic 3'-5' exoribonuclease that plays an important role in tRNA 3'-end maturation. Removes nucleotide residues following the 3'-CCA terminus of tRNAs; can also add nucleotides to the ends of RNA molecules by using nucleoside diphosphates as substrates, but this may not be physiologically important. Probably plays a role in initiation of 16S rRNA degradation (leading to ribosome degradation) during starvation. This chain is Ribonuclease PH, found in Saccharophagus degradans (strain 2-40 / ATCC 43961 / DSM 17024).